Consider the following 398-residue polypeptide: DNA polymerase IV (398 aa).

The UmuC domain maps to 5 to 187 (IFLVDMNAFF…LSIKSMHGVG (183 aa)). Mg(2+)-binding residues include aspartate 9 and aspartate 105. The active site involves glutamate 106.

This sequence belongs to the DNA polymerase type-Y family. As to quaternary structure, monomer. Mg(2+) is required as a cofactor.

The protein resides in the cytoplasm. It catalyses the reaction DNA(n) + a 2'-deoxyribonucleoside 5'-triphosphate = DNA(n+1) + diphosphate. Its function is as follows. Poorly processive, error-prone DNA polymerase involved in untargeted mutagenesis. Copies undamaged DNA at stalled replication forks, which arise in vivo from mismatched or misaligned primer ends. These misaligned primers can be extended by PolIV. Exhibits no 3'-5' exonuclease (proofreading) activity. May be involved in translesional synthesis, in conjunction with the beta clamp from PolIII. This Alkaliphilus oremlandii (strain OhILAs) (Clostridium oremlandii (strain OhILAs)) protein is DNA polymerase IV.